Here is a 288-residue protein sequence, read N- to C-terminus: Probable prolyl 4-hydroxylase 6 (288 aa).

Residues 1 to 4 (MDSQ) lie on the Cytoplasmic side of the membrane. A helical; Signal-anchor for type II membrane protein transmembrane segment spans residues 5-27 (YFLAFSLSLLLIFSQISSFSFSV). Topologically, residues 28–288 (DPTRITQLSW…GFCRKSCKAC (261 aa)) are lumenal. The Fe2OG dioxygenase domain occupies 116–238 (NGEALQILHY…KWSATRWIHV (123 aa)). Positions 134 and 136 each coordinate Fe cation. N160 and N210 each carry an N-linked (GlcNAc...) asparagine glycan. Fe cation is bound at residue H219. K229 provides a ligand contact to 2-oxoglutarate. A ShKT domain is found at 248 to 288 (CVDDHESCQEWADAGECEKNPMYMVGSETSLGFCRKSCKAC). 3 disulfides stabilise this stretch: C248–C288, C255–C281, and C264–C285.

This sequence belongs to the P4HA family. The cofactor is Fe(2+). It depends on L-ascorbate as a cofactor.

The protein resides in the endoplasmic reticulum membrane. The enzyme catalyses L-prolyl-[collagen] + 2-oxoglutarate + O2 = trans-4-hydroxy-L-prolyl-[collagen] + succinate + CO2. Its function is as follows. Catalyzes the post-translational formation of 4-hydroxyproline in -Xaa-Pro-Gly- sequences in proline-rich peptide sequences of plant glycoproteins and other proteins. Hydroxyprolines are important constituent of many plant cell wall glycoproteins such as extensins, hydroxyproline-rich glycoproteins, lectins and arabinogalactan proteins. This chain is Probable prolyl 4-hydroxylase 6, found in Arabidopsis thaliana (Mouse-ear cress).